The chain runs to 403 residues: MAKNIPFKLILEKAKDYQADMTRFLRDMVAIPSESCDEKRVVHRIKEEMEKVGFDKVEIDPMGNVLGYIGHGPRLVAMDAHIDTVGIGNIKNWDFDPYEGMETDELIGGRGTSDQEGGMASMVYAGKIIKDLGLEDEYTLLVTGTVQEEDCDGLCWQYIIEQSGIRPEFVVSTEPTDCQVYRGQRGRMEIRIDVQGVSCHGSAPERGDNAIFKMGPILGELQELSQRLGYDEFLGKGTLTVSEIFFTSPSRCAVADSCAVSIDRRLTWGETWEGALDEIRALPAVQKANAVVSMYNYDRPSWTGLVYPTECYFPTWKVEEDHFTVKALVNAYEGLFGKAPVVDKWTFSTNGVSIMGRHGIPVIGFGPGKEPEAHAPNEKTWKSHLVTCAAMYAAIPLSWLATE.

His-81 contacts Zn(2+). The active site involves Asp-83. Residue Asp-114 participates in Zn(2+) binding. Catalysis depends on Glu-148, which acts as the Proton acceptor. Zn(2+) contacts are provided by Glu-149, Glu-174, and His-374.

This sequence belongs to the peptidase M20A family. The cofactor is Zn(2+). Co(2+) serves as cofactor.

This is an uncharacterized protein from Escherichia coli O157:H7.